We begin with the raw amino-acid sequence, 68 residues long: Non-specific lipid-transfer protein 2 (68 aa).

This sequence belongs to the plant LTP family.

Its function is as follows. Plant non-specific lipid-transfer proteins transfer phospholipids as well as galactolipids across membranes. May play a role in wax or cutin deposition in the cell walls of expanding epidermal cells and certain secretory tissues. This is Non-specific lipid-transfer protein 2 from Prunus armeniaca (Apricot).